A 112-amino-acid polypeptide reads, in one-letter code: Putative pterin-4-alpha-carbinolamine dehydratase (112 aa).

This sequence belongs to the pterin-4-alpha-carbinolamine dehydratase family.

It catalyses the reaction (4aS,6R)-4a-hydroxy-L-erythro-5,6,7,8-tetrahydrobiopterin = (6R)-L-erythro-6,7-dihydrobiopterin + H2O. The protein is Putative pterin-4-alpha-carbinolamine dehydratase of Shewanella pealeana (strain ATCC 700345 / ANG-SQ1).